A 119-amino-acid polypeptide reads, in one-letter code: Beta-2-microglobulin (119 aa).

Positions 1–20 (MARFVVVALLVLLSLSGLEA) are cleaved as a signal peptide. In terms of domain architecture, Ig-like C1-type spans 25–114 (PKIQVYSRHP…VTFSTPKTVK (90 aa)). A disulfide bridge links C45 with C100.

Belongs to the beta-2-microglobulin family. In terms of assembly, heterodimer of an alpha chain and a beta chain. Beta-2-microglobulin is the beta-chain of major histocompatibility complex class I molecules.

The protein resides in the secreted. In terms of biological role, component of the class I major histocompatibility complex (MHC). Involved in the presentation of peptide antigens to the immune system. The chain is Beta-2-microglobulin (B2M) from Callimico goeldii (Goeldi's marmoset).